The primary structure comprises 798 residues: Sodium/hydrogen exchanger 4 (798 aa).

At 1–13 (MALQMFVTYSPWN) the chain is on the cytoplasmic side. The name=A/M1 intramembrane region spans 14 to 28 (CLLLLVALECSEASS). The Cytoplasmic portion of the chain corresponds to 29–69 (DLNESANSTAQYASNAWFAAASSEPEEGISVFELDYDYVQI). An intramembrane region (name=B/M2) is located at residues 70 to 90 (PYEVTLWILLASLAKIGFHLY). At 91 to 94 (HRLP) the chain is on the cytoplasmic side. The chain crosses the membrane as a helical span at residues 95–115 (GLMPESCLLILVGALVGGIIF). Residues 116-127 (GTDHKSPPVMDS) lie on the Extracellular side of the membrane. The helical transmembrane segment at 128–148 (SIYFLYLLPPIVLEGGYFMPT) threads the bilayer. Residues 149–154 (RPFFEN) lie on the Cytoplasmic side of the membrane. The helical transmembrane segment at 155–175 (IGSILWWAVLGALINALGIGL) threads the bilayer. Residues 176–196 (SLYLICQVKAFGLGDVNLLQN) lie on the Extracellular side of the membrane. A helical membrane pass occupies residues 197-217 (LLFGSLISAVDPVAVLAVFEE). The Cytoplasmic portion of the chain corresponds to 218 to 226 (ARVNEQLYM). A helical transmembrane segment spans residues 227–247 (MIFGEALLNDGITVVLYNMLI). Topologically, residues 248 to 270 (AFTKMHKFEDIETVDILAGCARF) are extracellular. The chain crosses the membrane as a helical span at residues 271-291 (IVVGLGGVLFGIVFGFISAFI). Residues 292–304 (TRFTQNISAIEPL) lie on the Cytoplasmic side of the membrane. A helical transmembrane segment spans residues 305–325 (IVFMFSYLSYLAAETLYLSGI). Residues 326 to 356 (LAITACAVTMKKYVEENVSQTSYTTIKYFMK) lie on the Extracellular side of the membrane. N342 is a glycosylation site (N-linked (GlcNAc...) asparagine). The chain crosses the membrane as a helical span at residues 357 to 373 (MLSSVSETLIFIFMGVS). Residues 374–384 (TVGKNHEWNWA) are Cytoplasmic-facing. Residues 385-405 (FICFTLAFCQIWRAISVFALF) form a helical membrane-spanning segment. The Extracellular portion of the chain corresponds to 406–420 (YISNQFRTFPFSIKD). The name=L intramembrane region spans 421-441 (QCIIFYSGVRGAGSFSLAFLL). At 442–450 (PLSLFPRKK) the chain is on the extracellular side. Residues 451-471 (MFVTATLVVIYFTVFIQGITV) traverse the membrane as a helical segment. Residues 472–798 (GPLVRYLDVK…RSHSPLLQKK (327 aa)) are Cytoplasmic-facing. Disordered regions lie at residues 662–690 (PYGNPQSAGRDTRAAGFSDDDSSDPGSPS) and 776–798 (RWTADHGHGRDHHRSHSPLLQKK). Positions 784-798 (GRDHHRSHSPLLQKK) are enriched in basic residues.

This sequence belongs to the monovalent cation:proton antiporter 1 (CPA1) transporter (TC 2.A.36) family. Homodimer; each protomer has one site for sodium and one site for proton binding. Interacts with CHP1 and CHP2. May be phosphorylated.

It localises to the basolateral cell membrane. The protein localises to the apical cell membrane. Its subcellular location is the zymogen granule membrane. The enzyme catalyses Na(+)(in) + H(+)(out) = Na(+)(out) + H(+)(in). It catalyses the reaction Na(+)(out) + NH4(+)(in) = Na(+)(in) + NH4(+)(out). Its function is as follows. Electroneutral antiporter that exchanges sodium for protons or ammonium ions at the basolateral membrane of epithelia to regulate cell volume and intracellular pH upon hypertonic conditions. As part of transcellular ammonia transport in renal tubules, mediates basolateral ammonium extrusion in the medullary thick ascending limb, regulating the corticopapillary ammonium gradient and overall renal acid excretion. Mediates sodium:proton exchange in gastric parietal cells secondary to cAMP-dependent acid secretion and hyperosmolarity. Possibly coupled to chloride:bicarbonate antiporter, enables loading of parietal cells with sodium and chloride ions to maintain cell volume and normal gastric acid secretion. Functions as a sodium sensor in neurons of organum vasculosum of the lamina terminalis where it regulates water intake in response to increased sodium concentration in body fluids. In Homo sapiens (Human), this protein is Sodium/hydrogen exchanger 4 (SLC9A4).